We begin with the raw amino-acid sequence, 349 residues long: Glycerol-3-phosphate dehydrogenase [NAD(P)+] (349 aa).

Positions 31, 32, 52, 53, and 126 each coordinate NADPH. The sn-glycerol 3-phosphate site is built by Lys-126, Gly-154, and Ser-156. Ala-158 is a binding site for NADPH. Residues Lys-209, Asp-262, Ser-272, Arg-273, and Asn-274 each coordinate sn-glycerol 3-phosphate. The active-site Proton acceptor is Lys-209. Arg-273 lines the NADPH pocket. NADPH-binding residues include Val-297 and Glu-299.

Belongs to the NAD-dependent glycerol-3-phosphate dehydrogenase family.

It localises to the cytoplasm. The catalysed reaction is sn-glycerol 3-phosphate + NAD(+) = dihydroxyacetone phosphate + NADH + H(+). The enzyme catalyses sn-glycerol 3-phosphate + NADP(+) = dihydroxyacetone phosphate + NADPH + H(+). It functions in the pathway membrane lipid metabolism; glycerophospholipid metabolism. Functionally, catalyzes the reduction of the glycolytic intermediate dihydroxyacetone phosphate (DHAP) to sn-glycerol 3-phosphate (G3P), the key precursor for phospholipid synthesis. In Clostridium tetani (strain Massachusetts / E88), this protein is Glycerol-3-phosphate dehydrogenase [NAD(P)+].